The primary structure comprises 140 residues: Phosphoribosyl-AMP cyclohydrolase (140 aa).

Aspartate 85 serves as a coordination point for Mg(2+). Cysteine 86 serves as a coordination point for Zn(2+). Mg(2+) is bound by residues aspartate 87 and aspartate 89. Zn(2+) contacts are provided by cysteine 102 and cysteine 109.

This sequence belongs to the PRA-CH family. Homodimer. Mg(2+) serves as cofactor. Zn(2+) is required as a cofactor.

It localises to the cytoplasm. The catalysed reaction is 1-(5-phospho-beta-D-ribosyl)-5'-AMP + H2O = 1-(5-phospho-beta-D-ribosyl)-5-[(5-phospho-beta-D-ribosylamino)methylideneamino]imidazole-4-carboxamide. Its pathway is amino-acid biosynthesis; L-histidine biosynthesis; L-histidine from 5-phospho-alpha-D-ribose 1-diphosphate: step 3/9. Its function is as follows. Catalyzes the hydrolysis of the adenine ring of phosphoribosyl-AMP. The polypeptide is Phosphoribosyl-AMP cyclohydrolase (Bradyrhizobium diazoefficiens (strain JCM 10833 / BCRC 13528 / IAM 13628 / NBRC 14792 / USDA 110)).